A 157-amino-acid chain; its full sequence is Small ribosomal subunit protein uS7 (157 aa).

It belongs to the universal ribosomal protein uS7 family. In terms of assembly, part of the 30S ribosomal subunit. Contacts proteins S9 and S11.

In terms of biological role, one of the primary rRNA binding proteins, it binds directly to 16S rRNA where it nucleates assembly of the head domain of the 30S subunit. Is located at the subunit interface close to the decoding center, probably blocks exit of the E-site tRNA. This is Small ribosomal subunit protein uS7 from Chlamydia felis (strain Fe/C-56) (Chlamydophila felis).